We begin with the raw amino-acid sequence, 397 residues long: N-acetyllactosaminide beta-1,3-N-acetylglucosaminyltransferase 2 (397 aa).

Residues 1–7 are Cytoplasmic-facing; that stretch reads MSVGRRR. The helical; Signal-anchor for type II membrane protein transmembrane segment at 8 to 28 threads the bilayer; it reads IKLLGILMMANVFIYFIMEVS. Topologically, residues 29–397 are lumenal; that stretch reads KSSSQEKNGK…SQLQSAHLKC (369 aa). 5 N-linked (GlcNAc...) asparagine glycosylation sites follow: Asn79, Asn89, Asn127, Asn173, and Asn219.

It belongs to the glycosyltransferase 31 family. Interacts with B3GNT8; this interaction greatly increases B3GNT2 catalytic activity, independently of B3GNT8 enzymatic activity. It depends on Mn(2+) as a cofactor. Ubiquitous.

It localises to the golgi apparatus membrane. The catalysed reaction is a beta-D-galactosyl-(1-&gt;4)-N-acetyl-beta-D-glucosaminyl derivative + UDP-N-acetyl-alpha-D-glucosamine = an N-acetyl-beta-D-glucosaminyl-(1-&gt;3)-beta-D-galactosyl-(1-&gt;4)-N-acetyl-beta-D-glucosaminyl derivative + UDP + H(+). It functions in the pathway protein modification; protein glycosylation. Beta-1,3-N-acetylglucosaminyltransferase involved in the synthesis of poly-N-acetyllactosamine. Catalyzes the initiation and elongation of poly-N-acetyllactosamine chains. Shows a marked preference for Gal(beta1-4)Glc(NAc)-based acceptors. Probably constitutes the main polylactosamine synthase. In Homo sapiens (Human), this protein is N-acetyllactosaminide beta-1,3-N-acetylglucosaminyltransferase 2 (B3GNT2).